A 106-amino-acid polypeptide reads, in one-letter code: Large ribosomal subunit protein uL24 (106 aa).

This sequence belongs to the universal ribosomal protein uL24 family. In terms of assembly, part of the 50S ribosomal subunit.

One of two assembly initiator proteins, it binds directly to the 5'-end of the 23S rRNA, where it nucleates assembly of the 50S subunit. Its function is as follows. One of the proteins that surrounds the polypeptide exit tunnel on the outside of the subunit. The protein is Large ribosomal subunit protein uL24 of Acinetobacter baylyi (strain ATCC 33305 / BD413 / ADP1).